We begin with the raw amino-acid sequence, 654 residues long: MSTLDSILKETRSFAPSEEFRRKASISGIEAYHALCEQADDHYLSFWGDLARELITWKKPFSRVLDDSQAPFFKWFDDGVLNASYNCLDRHLAANANKIAIIFEADDGEVTRVTYSELHRRVCQFANGLKSLGVKKGDRVVVYMPMGIEAVVTMQACARIGAIHSVVFGGFSAGAVRDRIQDAGATVVVTANESVRGGKNVPLKATVDEALALEGAESVRHVVVYQRTNGGADWTDGRDVWWHKLIEGQSEACEPEWMGAEDPLFILYTSGSTGKPKGIQHSTAGYLLGALNSFRWVFDYKPNDVFWCTADVGWITGHSYVCYGPLANGATQVIFEGVPTYPDAGRFWKMIEQHKVSIFYTAPTAIRSLIKLGSDLPKQYDLSSLRVLGTVGEPINPEAWIWYYETVGGGRCPIVDTWWQTETGSTMIAPLPGAIATKPGSCTLPLPGVIADIVDESGAQVEPGRGGFLVIKKPFPSLVRTIWNDPERFKKTYFPDEFDGKYYLAGDSAHRDENGYFWIMGRIDDVLNVSGHRLGTMEIESALVANPLVAEAAVVGKPHEVKGEAVVAFVVLKGARPQGDAAKTVAAELKNWVAHEIGKIAQPDDIRFGENLPKTRSGKIMRRLLRSIAKGEEITQDVSTLENPQILQQLQQPL.

CoA is bound by residues 196–199 and Thr316; that span reads RGGK. ATP-binding positions include 392-394, 416-421, Asp507, and Arg522; these read GEP and DTWWQT. Ser530 contributes to the CoA binding site. Arg533 is a binding site for ATP. Positions 544 and 549 each coordinate Mg(2+). An N6-acetyllysine modification is found at Lys619.

This sequence belongs to the ATP-dependent AMP-binding enzyme family. Mg(2+) is required as a cofactor. Post-translationally, acetylated. Deacetylation by the SIR2-homolog deacetylase activates the enzyme.

It carries out the reaction acetate + ATP + CoA = acetyl-CoA + AMP + diphosphate. Its function is as follows. Catalyzes the conversion of acetate into acetyl-CoA (AcCoA), an essential intermediate at the junction of anabolic and catabolic pathways. AcsA undergoes a two-step reaction. In the first half reaction, AcsA combines acetate with ATP to form acetyl-adenylate (AcAMP) intermediate. In the second half reaction, it can then transfer the acetyl group from AcAMP to the sulfhydryl group of CoA, forming the product AcCoA. This is Acetyl-coenzyme A synthetase from Chromobacterium violaceum (strain ATCC 12472 / DSM 30191 / JCM 1249 / CCUG 213 / NBRC 12614 / NCIMB 9131 / NCTC 9757 / MK).